The sequence spans 419 residues: Phosphoglycerate kinase (419 aa).

(2R)-3-phosphoglycerate contacts are provided by Val24, Asp25, Phe26, Asn27, Arg40, Ser63, His64, Gly66, Arg67, Leu122, Arg123, His169, and Arg170. An ADP-binding site is contributed by Gly213. Gly213 contacts CDP. Ala214 and Lys215 together coordinate AMP. An ATP-binding site is contributed by Ala214. Position 214 (Ala214) interacts with Mg(2+). Mg(2+) is bound by residues Ala217 and Asp218. Residue Asp218 participates in CDP binding. Lys219 contributes to the AMP binding site. Residue Lys219 participates in ATP binding. Position 237 (Gly237) interacts with ADP. Residue Gly237 coordinates CDP. AMP is bound by residues Gly238 and Gly313. Positions 238 and 313 each coordinate ATP. CDP is bound by residues Gly338 and Phe343. Phe343 provides a ligand contact to ADP. Glu344 lines the AMP pocket. ATP contacts are provided by Glu344, Asp375, and Thr376. Mg(2+) is bound at residue Asp375.

This sequence belongs to the phosphoglycerate kinase family. Monomer. Requires Mg(2+) as cofactor.

It catalyses the reaction (2R)-3-phosphoglycerate + ATP = (2R)-3-phospho-glyceroyl phosphate + ADP. The protein operates within carbohydrate degradation; glycolysis; pyruvate from D-glyceraldehyde 3-phosphate: step 2/5. The polypeptide is Phosphoglycerate kinase (PGK) (Sterkiella nova (Ciliate)).